We begin with the raw amino-acid sequence, 168 residues long: G/U mismatch-specific DNA glycosylase (168 aa).

Belongs to the uracil-DNA glycosylase (UDG) superfamily. TDG/mug family. As to quaternary structure, binds DNA as a monomer.

It is found in the cytoplasm. The catalysed reaction is Specifically hydrolyzes mismatched double-stranded DNA and polynucleotides, releasing free uracil.. In terms of biological role, excises ethenocytosine and uracil, which can arise by alkylation or deamination of cytosine, respectively, from the corresponding mispairs with guanine in ds-DNA. It is capable of hydrolyzing the carbon-nitrogen bond between the sugar-phosphate backbone of the DNA and the mispaired base. The complementary strand guanine functions in substrate recognition. Required for DNA damage lesion repair in stationary-phase cells. This chain is G/U mismatch-specific DNA glycosylase, found in Escherichia coli O139:H28 (strain E24377A / ETEC).